Here is an 80-residue protein sequence, read N- to C-terminus: UPF0154 protein SaurJH1_1431 (80 aa).

A helical transmembrane segment spans residues 4–24; the sequence is WLAIIFIVAALILGLIGGFLL.

This sequence belongs to the UPF0154 family.

The protein localises to the cell membrane. The polypeptide is UPF0154 protein SaurJH1_1431 (Staphylococcus aureus (strain JH1)).